A 291-amino-acid polypeptide reads, in one-letter code: Methylsterol monooxygenase 1-3 (291 aa).

Transmembrane regions (helical) follow at residues 41-61 (TILV…IVEW), 92-112 (FLLV…MVGI), and 114-134 (SGLP…YFLI). One can recognise a Fatty acid hydroxylase domain in the interval 128 to 263 (LVVYFLIEDY…FTYCDYIYGT (136 aa)). The short motif at 143-147 (HRWMH) is the Histidine box-1 element. The short motif at 156-160 (HRIHH) is the Histidine box-2 element. A helical transmembrane segment spans residues 178–198 (ILILGIPTFLGPAIAPGHIMT). The short motif at 235–241 (YHDYHHY) is the Histidine box-3 element.

It belongs to the sterol desaturase family. Interacts with ACBP1. Requires Fe cation as cofactor. Expressed at low levels in leaves, roots, siliques and flowers.

The protein resides in the endoplasmic reticulum membrane. The catalysed reaction is 4,4-dimethyl-5alpha-cholest-7-en-3beta-ol + 6 Fe(II)-[cytochrome b5] + 3 O2 + 5 H(+) = 4alpha-carboxy-4beta-methyl-5alpha-cholest-7-ene-3beta-ol + 6 Fe(III)-[cytochrome b5] + 4 H2O. The enzyme catalyses 24-methylidenelophenol + 6 Fe(II)-[cytochrome b5] + 3 O2 + 5 H(+) = 4alpha-carboxy-ergosta-7,24(24(1))-dien-3beta-ol + 6 Fe(III)-[cytochrome b5] + 4 H2O. Non-heme iron oxygenase involved in sterols biosynthesis by catalyzing the removal of the first methyl group at the C-4 position. 4,4-dimethyl-9-beta,19-cyclopropylsterols such as 24-methylenecycloartanol are the preferred substrates. This Arabidopsis thaliana (Mouse-ear cress) protein is Methylsterol monooxygenase 1-3.